The sequence spans 629 residues: tRNA uridine 5-carboxymethylaminomethyl modification enzyme MnmG (629 aa).

Residue 13-18 participates in FAD binding; that stretch reads GGGHAG. 273 to 287 serves as a coordination point for NAD(+); the sequence is GPRYCPSIEDKVVRF.

The protein belongs to the MnmG family. Homodimer. Heterotetramer of two MnmE and two MnmG subunits. Requires FAD as cofactor.

It is found in the cytoplasm. Functionally, NAD-binding protein involved in the addition of a carboxymethylaminomethyl (cmnm) group at the wobble position (U34) of certain tRNAs, forming tRNA-cmnm(5)s(2)U34. This chain is tRNA uridine 5-carboxymethylaminomethyl modification enzyme MnmG, found in Alkalilimnicola ehrlichii (strain ATCC BAA-1101 / DSM 17681 / MLHE-1).